A 306-amino-acid chain; its full sequence is Ornithine carbamoyltransferase (306 aa).

Carbamoyl phosphate is bound by residues S51–T54, Q78, R102, and H129–Q132. L-ornithine is bound by residues N160, D223, and S227–M228. Carbamoyl phosphate contacts are provided by residues C263–L264 and R291.

The protein belongs to the aspartate/ornithine carbamoyltransferase superfamily. OTCase family.

It is found in the cytoplasm. It catalyses the reaction carbamoyl phosphate + L-ornithine = L-citrulline + phosphate + H(+). It functions in the pathway amino-acid biosynthesis; L-arginine biosynthesis; L-arginine from L-ornithine and carbamoyl phosphate: step 1/3. Functionally, reversibly catalyzes the transfer of the carbamoyl group from carbamoyl phosphate (CP) to the N(epsilon) atom of ornithine (ORN) to produce L-citrulline. The protein is Ornithine carbamoyltransferase of Trichormus variabilis (strain ATCC 29413 / PCC 7937) (Anabaena variabilis).